Here is a 93-residue protein sequence, read N- to C-terminus: YcgL domain-containing protein KPN78578_22820 (93 aa).

Residues 1–85 (MFCVIYRSTK…PSENLLKKHL (85 aa)) enclose the YcgL domain.

The chain is YcgL domain-containing protein KPN78578_22820 from Klebsiella pneumoniae subsp. pneumoniae (strain ATCC 700721 / MGH 78578).